The chain runs to 615 residues: Dihydroxy-acid dehydratase (615 aa).

Asp-81 contributes to the Mg(2+) binding site. Residue Cys-122 coordinates [2Fe-2S] cluster. Mg(2+) is bound by residues Asp-123 and Lys-124. Lys-124 carries the post-translational modification N6-carboxylysine. Position 195 (Cys-195) interacts with [2Fe-2S] cluster. Glu-491 is a Mg(2+) binding site. Catalysis depends on Ser-517, which acts as the Proton acceptor.

The protein belongs to the IlvD/Edd family. In terms of assembly, homodimer. [2Fe-2S] cluster is required as a cofactor. Requires Mg(2+) as cofactor.

The enzyme catalyses (2R)-2,3-dihydroxy-3-methylbutanoate = 3-methyl-2-oxobutanoate + H2O. It carries out the reaction (2R,3R)-2,3-dihydroxy-3-methylpentanoate = (S)-3-methyl-2-oxopentanoate + H2O. Its pathway is amino-acid biosynthesis; L-isoleucine biosynthesis; L-isoleucine from 2-oxobutanoate: step 3/4. It participates in amino-acid biosynthesis; L-valine biosynthesis; L-valine from pyruvate: step 3/4. Functionally, functions in the biosynthesis of branched-chain amino acids. Catalyzes the dehydration of (2R,3R)-2,3-dihydroxy-3-methylpentanoate (2,3-dihydroxy-3-methylvalerate) into 2-oxo-3-methylpentanoate (2-oxo-3-methylvalerate) and of (2R)-2,3-dihydroxy-3-methylbutanoate (2,3-dihydroxyisovalerate) into 2-oxo-3-methylbutanoate (2-oxoisovalerate), the penultimate precursor to L-isoleucine and L-valine, respectively. The polypeptide is Dihydroxy-acid dehydratase (Novosphingobium aromaticivorans (strain ATCC 700278 / DSM 12444 / CCUG 56034 / CIP 105152 / NBRC 16084 / F199)).